A 215-amino-acid polypeptide reads, in one-letter code: Peroxiredoxin-5, mitochondrial (215 aa).

A mitochondrion-targeting transit peptide spans 1-53 (MGLAGVCVLRRSAGYILGGAARQSVAATAAARRRSEGGWASGGVRSFSRAAAA). The region spanning 57-215 (IKVGDAIPAV…SLAPSIISQL (159 aa)) is the Thioredoxin domain. Residue K76 is modified to N6-acetyllysine. K84 bears the N6-acetyllysine; alternate mark. K84 is modified (N6-succinyllysine; alternate). C101 acts as the Cysteine sulfenic acid (-SOH) intermediate in catalysis. Residue C101 is the site of S-palmitoyl cysteine attachment. An intrachain disulfide couples C101 to C205. Residue K117 is modified to N6-succinyllysine. S172 and S183 each carry phosphoserine. Positions 213–215 (SQL) match the Microbody targeting signal motif.

This sequence belongs to the peroxiredoxin family. Prx5 subfamily. As to quaternary structure, monomer. Post-translationally, S-palmitoylated. Palmitoylation occurs on the active site, inhibiting its reactivity; therefore PRDX5 palmitoylation status determines its antioxidant capacity. S-palmitoylated. Depalmitoylated by ABHD10.

The protein localises to the mitochondrion. It localises to the cytoplasm. The protein resides in the peroxisome matrix. It catalyses the reaction a hydroperoxide + [thioredoxin]-dithiol = an alcohol + [thioredoxin]-disulfide + H2O. In terms of biological role, thiol-specific peroxidase that catalyzes the reduction of hydrogen peroxide and organic hydroperoxides to water and alcohols, respectively. Plays a role in cell protection against oxidative stress by detoxifying peroxides and as sensor of hydrogen peroxide-mediated signaling events. This chain is Peroxiredoxin-5, mitochondrial (PRDX5), found in Chlorocebus aethiops (Green monkey).